A 216-amino-acid polypeptide reads, in one-letter code: Adenylate kinase (216 aa).

10-15 (GAGKGT) provides a ligand contact to ATP. Positions 30–59 (STGDIFRKNISEKTPLGVKAKEYMDKGQLV) are NMP. Residues T31, R36, 57–59 (QLV), 85–88 (GFPR), and Q92 contribute to the AMP site. The LID stretch occupies residues 126–163 (GRRVCPSCGASYHIKFNPPKIEGLCDVCKKEVIQRKDD). Position 127 (R127) interacts with ATP. Positions 130 and 133 each coordinate Zn(2+). 136 to 137 (SY) lines the ATP pocket. Zn(2+) is bound by residues C150 and C153. The AMP site is built by R160 and R171. Residue Q199 participates in ATP binding.

The protein belongs to the adenylate kinase family. Monomer.

The protein resides in the cytoplasm. The catalysed reaction is AMP + ATP = 2 ADP. It functions in the pathway purine metabolism; AMP biosynthesis via salvage pathway; AMP from ADP: step 1/1. Its function is as follows. Catalyzes the reversible transfer of the terminal phosphate group between ATP and AMP. Plays an important role in cellular energy homeostasis and in adenine nucleotide metabolism. The chain is Adenylate kinase from Clostridium novyi (strain NT).